Reading from the N-terminus, the 130-residue chain is Small ribosomal subunit protein eS6 (130 aa).

This sequence belongs to the eukaryotic ribosomal protein eS6 family.

This Methanosphaera stadtmanae (strain ATCC 43021 / DSM 3091 / JCM 11832 / MCB-3) protein is Small ribosomal subunit protein eS6.